Here is a 32-residue protein sequence, read N- to C-terminus: Beta-1,4-galactosyltransferase 1 (32 aa).

It belongs to the glycosyltransferase 7 family. The cofactor is Mn(2+). The soluble form derives from the membrane form by proteolytic processing.

It localises to the golgi apparatus. It is found in the golgi stack membrane. The protein localises to the secreted. The protein resides in the cell membrane. Its subcellular location is the cell projection. It localises to the filopodium. The enzyme catalyses D-glucose + UDP-alpha-D-galactose = lactose + UDP + H(+). The catalysed reaction is an N-acetyl-beta-D-glucosaminyl derivative + UDP-alpha-D-galactose = a beta-D-galactosyl-(1-&gt;4)-N-acetyl-beta-D-glucosaminyl derivative + UDP + H(+). It catalyses the reaction N-acetyl-D-glucosamine + UDP-alpha-D-galactose = beta-D-galactosyl-(1-&gt;4)-N-acetyl-D-glucosamine + UDP + H(+). It carries out the reaction a beta-D-GlcNAc-(1-&gt;3)-beta-D-Gal-(1-&gt;4)-beta-D-Glc-(1&lt;-&gt;1)-Cer(d18:1(4E)) + UDP-alpha-D-galactose = a neolactoside nLc4Cer(d18:1(4E)) + UDP + H(+). The enzyme catalyses a beta-D-glucosylceramide + UDP-alpha-D-galactose = a beta-D-galactosyl-(1-&gt;4)-beta-D-glucosyl-(1&lt;-&gt;1)-ceramide + UDP + H(+). The catalysed reaction is a neolactoside IV(3)-beta-GlcNAc-nLc4Cer + UDP-alpha-D-galactose = a neolactoside nLc6Cer + UDP + H(+). It participates in protein modification; protein glycosylation. Its function is as follows. This protein is responsible for the synthesis of complex-type N-linked oligosaccharides in many glycoproteins as well as the carbohydrate moieties of glycolipids. This is Beta-1,4-galactosyltransferase 1 from Rattus norvegicus (Rat).